Here is a 147-residue protein sequence, read N- to C-terminus: Large ribosomal subunit protein uL15 (147 aa).

The segment at 1–57 is disordered; sequence MKLHELKSAPKSRNHKAKVVGRGHGSGLGKTSGRGQKGQKARKSGRTRPGFEGGQTP. The segment covering 10-21 has biased composition (basic residues); the sequence is PKSRNHKAKVVG. The span at 22–36 shows a compositional bias: gly residues; that stretch reads RGHGSGLGKTSGRGQ. Residues 37-46 are compositionally biased toward basic residues; sequence KGQKARKSGR.

This sequence belongs to the universal ribosomal protein uL15 family. In terms of assembly, part of the 50S ribosomal subunit.

In terms of biological role, binds to the 23S rRNA. This Mycoplasmoides gallisepticum (strain R(low / passage 15 / clone 2)) (Mycoplasma gallisepticum) protein is Large ribosomal subunit protein uL15.